The sequence spans 204 residues: LexA repressor (204 aa).

Residues 31–51 constitute a DNA-binding region (H-T-H motif); the sequence is VREICAKVGLSSTSTVHGHLS. Catalysis depends on for autocatalytic cleavage activity residues Ser128 and Lys165.

The protein belongs to the peptidase S24 family. As to quaternary structure, homodimer.

The enzyme catalyses Hydrolysis of Ala-|-Gly bond in repressor LexA.. In terms of biological role, represses a number of genes involved in the response to DNA damage (SOS response), including recA and lexA. In the presence of single-stranded DNA, RecA interacts with LexA causing an autocatalytic cleavage which disrupts the DNA-binding part of LexA, leading to derepression of the SOS regulon and eventually DNA repair. This is LexA repressor from Clostridium acetobutylicum (strain ATCC 824 / DSM 792 / JCM 1419 / IAM 19013 / LMG 5710 / NBRC 13948 / NRRL B-527 / VKM B-1787 / 2291 / W).